A 444-amino-acid polypeptide reads, in one-letter code: Biotin carboxylase 2 (444 aa).

Residues 1–444 enclose the Biotin carboxylation domain; that stretch reads MFTKVLIANR…VTTDFLKQHL (444 aa). ATP contacts are provided by residues Lys116, Lys158, 164-165, 200-203, His208, and His235; these read GG and EKVI. Residues 120–317 form the ATP-grasp domain; that stretch reads RKAMEAAGVP…LVEQQLRIAA (198 aa). Lys237 lines the hydrogencarbonate pocket. 2 residues coordinate ATP: Glu275 and Glu288. Mg(2+)-binding residues include Glu275, Glu288, and Asn290. Mn(2+) contacts are provided by Glu275, Glu288, and Asn290. Hydrogencarbonate-binding residues include Arg292, Val295, and Arg338. Arg292 is a catalytic residue. Arg338 lines the biotin pocket.

As to quaternary structure, acetyl-CoA carboxylase is a heterohexamer of biotin carboxyl carrier protein, biotin carboxylase and the two subunits of carboxyl transferase in a 2:2 complex. It depends on Mg(2+) as a cofactor. Mn(2+) serves as cofactor.

It catalyses the reaction N(6)-biotinyl-L-lysyl-[protein] + hydrogencarbonate + ATP = N(6)-carboxybiotinyl-L-lysyl-[protein] + ADP + phosphate + H(+). It participates in lipid metabolism; malonyl-CoA biosynthesis; malonyl-CoA from acetyl-CoA: step 1/1. This protein is a component of the acetyl coenzyme A carboxylase complex; first, biotin carboxylase catalyzes the carboxylation of the carrier protein and then the transcarboxylase transfers the carboxyl group to form malonyl-CoA. This is Biotin carboxylase 2 (accC2) from Bacillus subtilis (strain 168).